Here is a 381-residue protein sequence, read N- to C-terminus: tRNA pseudouridine synthase D (381 aa).

Asp81 serves as the catalytic Nucleophile. Residues 160–335 enclose the TRUD domain; it reads GMPNYFGSQR…TLGSRRFFWV (176 aa).

This sequence belongs to the pseudouridine synthase TruD family.

The enzyme catalyses uridine(13) in tRNA = pseudouridine(13) in tRNA. Its function is as follows. Responsible for synthesis of pseudouridine from uracil-13 in transfer RNAs. This Helicobacter pylori (strain ATCC 700392 / 26695) (Campylobacter pylori) protein is tRNA pseudouridine synthase D.